Here is a 437-residue protein sequence, read N- to C-terminus: Enolase (437 aa).

Glutamine 162 serves as a coordination point for (2R)-2-phosphoglycerate. The active-site Proton donor is the glutamate 204. Residues aspartate 251, glutamate 297, and aspartate 324 each contribute to the Mg(2+) site. Lysine 349, arginine 378, serine 379, and lysine 400 together coordinate (2R)-2-phosphoglycerate. The Proton acceptor role is filled by lysine 349.

It belongs to the enolase family. Mg(2+) is required as a cofactor.

The protein resides in the cytoplasm. It localises to the secreted. It is found in the cell surface. It carries out the reaction (2R)-2-phosphoglycerate = phosphoenolpyruvate + H2O. It functions in the pathway carbohydrate degradation; glycolysis; pyruvate from D-glyceraldehyde 3-phosphate: step 4/5. Its function is as follows. Catalyzes the reversible conversion of 2-phosphoglycerate (2-PG) into phosphoenolpyruvate (PEP). It is essential for the degradation of carbohydrates via glycolysis. The polypeptide is Enolase (Pelodictyon phaeoclathratiforme (strain DSM 5477 / BU-1)).